The sequence spans 280 residues: Acetyl-coenzyme A carboxylase carboxyl transferase subunit beta (280 aa).

The region spanning 28 to 280 (IMTKCPSCRT…TLTKLLAMHQ (253 aa)) is the CoA carboxyltransferase N-terminal domain. Residues C32, C35, C51, and C54 each coordinate Zn(2+). The C4-type zinc finger occupies 32–54 (CPSCRTIMYTKDLKKNLSVCRTC).

It belongs to the AccD/PCCB family. As to quaternary structure, acetyl-CoA carboxylase is a heterohexamer composed of biotin carboxyl carrier protein (AccB), biotin carboxylase (AccC) and two subunits each of ACCase subunit alpha (AccA) and ACCase subunit beta (AccD). It depends on Zn(2+) as a cofactor.

The protein localises to the cytoplasm. It carries out the reaction N(6)-carboxybiotinyl-L-lysyl-[protein] + acetyl-CoA = N(6)-biotinyl-L-lysyl-[protein] + malonyl-CoA. It functions in the pathway lipid metabolism; malonyl-CoA biosynthesis; malonyl-CoA from acetyl-CoA: step 1/1. Functionally, component of the acetyl coenzyme A carboxylase (ACC) complex. Biotin carboxylase (BC) catalyzes the carboxylation of biotin on its carrier protein (BCCP) and then the CO(2) group is transferred by the transcarboxylase to acetyl-CoA to form malonyl-CoA. The chain is Acetyl-coenzyme A carboxylase carboxyl transferase subunit beta from Shouchella clausii (strain KSM-K16) (Alkalihalobacillus clausii).